A 178-amino-acid chain; its full sequence is N-alpha-acetyltransferase 20 (178 aa).

Residues T2 to S157 form the N-acetyltransferase domain. A disordered region spans residues D159 to E178.

This sequence belongs to the acetyltransferase family. ARD1 subfamily. As to quaternary structure, component of the N-terminal acetyltransferase B (NatB) complex which is composed of naa20 and naa25.

The protein localises to the cytoplasm. Its subcellular location is the nucleus. The catalysed reaction is N-terminal L-methionyl-L-asparaginyl-[protein] + acetyl-CoA = N-terminal N(alpha)-acetyl-L-methionyl-L-asparaginyl-[protein] + CoA + H(+). The enzyme catalyses N-terminal L-methionyl-L-glutaminyl-[protein] + acetyl-CoA = N-terminal N(alpha)-acetyl-L-methionyl-L-glutaminyl-[protein] + CoA + H(+). It catalyses the reaction N-terminal L-methionyl-L-aspartyl-[protein] + acetyl-CoA = N-terminal N(alpha)-acetyl-L-methionyl-L-aspartyl-[protein] + CoA + H(+). It carries out the reaction N-terminal L-methionyl-L-glutamyl-[protein] + acetyl-CoA = N-terminal N(alpha)-acetyl-L-methionyl-L-glutamyl-[protein] + CoA + H(+). Catalytic subunit of the NatB complex which catalyzes acetylation of the N-terminal methionine residues of peptides beginning with Met-Asp, Met-Glu, Met-Asn and Met-Gln. Proteins with cell cycle functions are overrepresented in the pool of NatB substrates. Required for maintaining the structure and function of actomyosin fibers and for proper cellular migration. In Xenopus laevis (African clawed frog), this protein is N-alpha-acetyltransferase 20 (naa20).